The following is a 206-amino-acid chain: Probable thymidylate kinase (206 aa).

Residue 7 to 14 (GIDGSGKS) coordinates ATP.

It belongs to the thymidylate kinase family.

The enzyme catalyses dTMP + ATP = dTDP + ADP. This is Probable thymidylate kinase from Methanospirillum hungatei JF-1 (strain ATCC 27890 / DSM 864 / NBRC 100397 / JF-1).